Reading from the N-terminus, the 203-residue chain is Outer-membrane lipoprotein carrier protein (203 aa).

The signal sequence occupies residues 1–21 (MKKIAITCALLSSLVASSVWA).

The protein belongs to the LolA family. Monomer.

The protein resides in the periplasm. Its function is as follows. Participates in the translocation of lipoproteins from the inner membrane to the outer membrane. Only forms a complex with a lipoprotein if the residue after the N-terminal Cys is not an aspartate (The Asp acts as a targeting signal to indicate that the lipoprotein should stay in the inner membrane). The protein is Outer-membrane lipoprotein carrier protein of Escherichia coli O139:H28 (strain E24377A / ETEC).